Here is a 552-residue protein sequence, read N- to C-terminus: Harmonin (552 aa).

The segment at methionine 1 to lysine 86 is N-terminal domain. 2 PDZ domains span residues glutamate 87–leucine 169 and lysine 211–glycine 293. Residues glycine 194 to phenylalanine 552 form a mediates interaction with MYO7B region. Serine 219 carries the phosphoserine modification. The stretch at arginine 310 to aspartate 377 forms a coiled coil. Residues lysine 401–glutamate 427 are disordered. Over residues valine 408–glutamate 427 the composition is skewed to acidic residues. Residues aspartate 452–valine 537 enclose the PDZ 3 domain.

In terms of assembly, part of the IMAC/intermicrovillar adhesion complex/intermicrovillar tip-link complex composed of ANKS4B, MYO7B, USH1C, CDHR2 and CDHR5. Part of a complex composed of USH1C, USH1G and MYO7A. Interacts with F-actin. Interacts with USH2A. Interacts with SLC4A7. Interacts (via PDZ1 domain) with the C-terminus of USHBP1. Interacts (via N-terminus and PDZ 2 domain) with CDH23. Interacts with USH1G. Interacts with MYO7B. Interacts with CDHR2 and CDHR5; may mediate their interaction with MYO7B at the microvilli tip. Interacts (via PDZ 1 domain) with ANKS4B. Interacts (via PDZ 1 domain) with DOCK4. As to expression, expressed in small intestine, colon, kidney, eye and weakly in pancreas. Expressed also in vestibule of the inner ear.

The protein localises to the cytoplasm. The protein resides in the cytosol. It is found in the cytoskeleton. It localises to the cell projection. Its subcellular location is the microvillus. Functionally, anchoring/scaffolding protein that is a part of the functional network formed by USH1C, USH1G, CDH23 and MYO7A that mediates mechanotransduction in cochlear hair cells. Required for normal development and maintenance of cochlear hair cell bundles. As part of the intermicrovillar adhesion complex/IMAC plays a role in brush border differentiation, controlling microvilli organization and length. Probably plays a central regulatory role in the assembly of the complex, recruiting CDHR2, CDHR5 and MYO7B to the microvilli tips. The chain is Harmonin (USH1C) from Homo sapiens (Human).